Consider the following 437-residue polypeptide: ATP-dependent protease ATPase subunit HslU (437 aa).

ATP is bound by residues V18, 60-65 (GVGKTE), D250, E315, and R387.

The protein belongs to the ClpX chaperone family. HslU subfamily. A double ring-shaped homohexamer of HslV is capped on each side by a ring-shaped HslU homohexamer. The assembly of the HslU/HslV complex is dependent on binding of ATP.

It is found in the cytoplasm. In terms of biological role, ATPase subunit of a proteasome-like degradation complex; this subunit has chaperone activity. The binding of ATP and its subsequent hydrolysis by HslU are essential for unfolding of protein substrates subsequently hydrolyzed by HslV. HslU recognizes the N-terminal part of its protein substrates and unfolds these before they are guided to HslV for hydrolysis. The protein is ATP-dependent protease ATPase subunit HslU of Desulfovibrio desulfuricans (strain ATCC 27774 / DSM 6949 / MB).